Here is a 524-residue protein sequence, read N- to C-terminus: Phosphoenolpyruvate carboxykinase (ATP) (524 aa).

Substrate contacts are provided by arginine 52, tyrosine 188, and lysine 194. ATP-binding positions include lysine 194, histidine 213, and 229–237 (GLSGTGKTT). Residues lysine 194 and histidine 213 each coordinate Mn(2+). Aspartate 250 contacts Mn(2+). The ATP site is built by glutamate 278, arginine 314, and threonine 439. Arginine 314 lines the substrate pocket.

This sequence belongs to the phosphoenolpyruvate carboxykinase (ATP) family. The cofactor is Mn(2+).

It localises to the cytoplasm. It carries out the reaction oxaloacetate + ATP = phosphoenolpyruvate + ADP + CO2. It functions in the pathway carbohydrate biosynthesis; gluconeogenesis. Involved in the gluconeogenesis. Catalyzes the conversion of oxaloacetate (OAA) to phosphoenolpyruvate (PEP) through direct phosphoryl transfer between the nucleoside triphosphate and OAA. This chain is Phosphoenolpyruvate carboxykinase (ATP), found in Campylobacter lari (strain RM2100 / D67 / ATCC BAA-1060).